We begin with the raw amino-acid sequence, 226 residues long: Deoxyribose-phosphate aldolase (226 aa).

Catalysis depends on Asp-84, which acts as the Proton donor/acceptor. Lys-146 (schiff-base intermediate with acetaldehyde) is an active-site residue. Lys-188 (proton donor/acceptor) is an active-site residue.

Belongs to the DeoC/FbaB aldolase family. DeoC type 1 subfamily.

It localises to the cytoplasm. The catalysed reaction is 2-deoxy-D-ribose 5-phosphate = D-glyceraldehyde 3-phosphate + acetaldehyde. It functions in the pathway carbohydrate degradation; 2-deoxy-D-ribose 1-phosphate degradation; D-glyceraldehyde 3-phosphate and acetaldehyde from 2-deoxy-alpha-D-ribose 1-phosphate: step 2/2. Catalyzes a reversible aldol reaction between acetaldehyde and D-glyceraldehyde 3-phosphate to generate 2-deoxy-D-ribose 5-phosphate. The protein is Deoxyribose-phosphate aldolase of Pyrobaculum arsenaticum (strain DSM 13514 / JCM 11321 / PZ6).